The following is an 821-amino-acid chain: DNA gyrase subunit A (821 aa).

The Topo IIA-type catalytic domain maps to 35–500 (LPDVRDGLKP…GLETIEDEDL (466 aa)). The active-site O-(5'-phospho-DNA)-tyrosine intermediate is the tyrosine 123. Residues 527–533 (QKRGGKG) carry the GyrA-box motif.

Belongs to the type II topoisomerase GyrA/ParC subunit family. Heterotetramer, composed of two GyrA and two GyrB chains. In the heterotetramer, GyrA contains the active site tyrosine that forms a transient covalent intermediate with DNA, while GyrB binds cofactors and catalyzes ATP hydrolysis.

Its subcellular location is the cytoplasm. It catalyses the reaction ATP-dependent breakage, passage and rejoining of double-stranded DNA.. In terms of biological role, a type II topoisomerase that negatively supercoils closed circular double-stranded (ds) DNA in an ATP-dependent manner to modulate DNA topology and maintain chromosomes in an underwound state. Negative supercoiling favors strand separation, and DNA replication, transcription, recombination and repair, all of which involve strand separation. Also able to catalyze the interconversion of other topological isomers of dsDNA rings, including catenanes and knotted rings. Type II topoisomerases break and join 2 DNA strands simultaneously in an ATP-dependent manner. This chain is DNA gyrase subunit A, found in Bacillus subtilis (strain 168).